The sequence spans 347 residues: Eukaryotic translation initiation factor 3 subunit H (347 aa).

The region spanning 6 to 149 is the MPN domain; that stretch reads VCIDSSVALK…PSSTGPQGHT (144 aa). The disordered stretch occupies residues 136 to 155; that stretch reads SDTDPSSTGPQGHTTTTPSG. Positions 138–155 are enriched in polar residues; it reads TDPSSTGPQGHTTTTPSG.

This sequence belongs to the eIF-3 subunit H family. In terms of assembly, component of the eukaryotic translation initiation factor 3 (eIF-3) complex.

It localises to the cytoplasm. Its function is as follows. Component of the eukaryotic translation initiation factor 3 (eIF-3) complex, which is involved in protein synthesis of a specialized repertoire of mRNAs and, together with other initiation factors, stimulates binding of mRNA and methionyl-tRNAi to the 40S ribosome. The eIF-3 complex specifically targets and initiates translation of a subset of mRNAs involved in cell proliferation. This Yarrowia lipolytica (strain CLIB 122 / E 150) (Yeast) protein is Eukaryotic translation initiation factor 3 subunit H.